The primary structure comprises 457 residues: Ribosomal protein uS12 methylthiotransferase RimO (457 aa).

An MTTase N-terminal domain is found at 6-116 (PKVGFVSLGC…VMEAVHAALP (111 aa)). Residues cysteine 15, cysteine 51, cysteine 80, cysteine 147, cysteine 151, and cysteine 154 each coordinate [4Fe-4S] cluster. Positions 133–370 (LTPRHYAYLK…MARQAEISAA (238 aa)) constitute a Radical SAM core domain. In terms of domain architecture, TRAM spans 373 to 441 (EAKIGSVQQC…EHDLFGDALP (69 aa)).

It belongs to the methylthiotransferase family. RimO subfamily. [4Fe-4S] cluster is required as a cofactor.

Its subcellular location is the cytoplasm. The catalysed reaction is L-aspartate(89)-[ribosomal protein uS12]-hydrogen + (sulfur carrier)-SH + AH2 + 2 S-adenosyl-L-methionine = 3-methylsulfanyl-L-aspartate(89)-[ribosomal protein uS12]-hydrogen + (sulfur carrier)-H + 5'-deoxyadenosine + L-methionine + A + S-adenosyl-L-homocysteine + 2 H(+). Functionally, catalyzes the methylthiolation of an aspartic acid residue of ribosomal protein uS12. The sequence is that of Ribosomal protein uS12 methylthiotransferase RimO from Xanthomonas campestris pv. campestris (strain 8004).